A 222-amino-acid chain; its full sequence is Cytidylate kinase (222 aa).

An ATP-binding site is contributed by 10–18 (GTSSSGKSV).

It belongs to the cytidylate kinase family. Type 1 subfamily.

It localises to the cytoplasm. It catalyses the reaction CMP + ATP = CDP + ADP. The enzyme catalyses dCMP + ATP = dCDP + ADP. In Mycoplasma capricolum subsp. capricolum (strain California kid / ATCC 27343 / NCTC 10154), this protein is Cytidylate kinase.